A 338-amino-acid polypeptide reads, in one-letter code: Anthranilate phosphoribosyltransferase (338 aa).

5-phospho-alpha-D-ribose 1-diphosphate contacts are provided by residues Gly-78, 81–82, Thr-86, 88–91, 106–114, and Ser-118; these read GD, NIST, and KHGNRSVSS. Residue Gly-78 participates in anthranilate binding. Mg(2+) is bound at residue Ser-90. Position 109 (Asn-109) interacts with anthranilate. Arg-164 serves as a coordination point for anthranilate. The Mg(2+) site is built by Asp-223 and Glu-224.

This sequence belongs to the anthranilate phosphoribosyltransferase family. In terms of assembly, homodimer. Requires Mg(2+) as cofactor.

The enzyme catalyses N-(5-phospho-beta-D-ribosyl)anthranilate + diphosphate = 5-phospho-alpha-D-ribose 1-diphosphate + anthranilate. The protein operates within amino-acid biosynthesis; L-tryptophan biosynthesis; L-tryptophan from chorismate: step 2/5. Functionally, catalyzes the transfer of the phosphoribosyl group of 5-phosphorylribose-1-pyrophosphate (PRPP) to anthranilate to yield N-(5'-phosphoribosyl)-anthranilate (PRA). The sequence is that of Anthranilate phosphoribosyltransferase from Bacillus velezensis (strain DSM 23117 / BGSC 10A6 / LMG 26770 / FZB42) (Bacillus amyloliquefaciens subsp. plantarum).